Here is a 275-residue protein sequence, read N- to C-terminus: Ditrans,polycis-undecaprenyl-diphosphate synthase ((2E,6E)-farnesyl-diphosphate specific) (275 aa).

Asp-45 is an active-site residue. Asp-45 serves as a coordination point for Mg(2+). Substrate contacts are provided by residues 46–49 (GNGR), Trp-50, Arg-58, His-62, and 90–92 (SSE). The Proton acceptor role is filled by Asn-93. Substrate-binding positions include Trp-94, Arg-96, Arg-213, and 219–221 (RIS). Glu-232 serves as a coordination point for Mg(2+).

It belongs to the UPP synthase family. As to quaternary structure, homodimer. The cofactor is Mg(2+).

It carries out the reaction 8 isopentenyl diphosphate + (2E,6E)-farnesyl diphosphate = di-trans,octa-cis-undecaprenyl diphosphate + 8 diphosphate. Catalyzes the sequential condensation of isopentenyl diphosphate (IPP) with (2E,6E)-farnesyl diphosphate (E,E-FPP) to yield (2Z,6Z,10Z,14Z,18Z,22Z,26Z,30Z,34E,38E)-undecaprenyl diphosphate (di-trans,octa-cis-UPP). UPP is the precursor of glycosyl carrier lipid in the biosynthesis of bacterial cell wall polysaccharide components such as peptidoglycan and lipopolysaccharide. This is Ditrans,polycis-undecaprenyl-diphosphate synthase ((2E,6E)-farnesyl-diphosphate specific) from Shewanella oneidensis (strain ATCC 700550 / JCM 31522 / CIP 106686 / LMG 19005 / NCIMB 14063 / MR-1).